Consider the following 65-residue polypeptide: Sodium channel alpha-toxin Acra4 (65 aa).

Residues 2–63 (RDGYIVDDKN…PIKDPSYKCH (62 aa)) enclose the LCN-type CS-alpha/beta domain. Intrachain disulfides connect Cys12-Cys62, Cys16-Cys34, Cys20-Cys44, and Cys24-Cys46. A propeptide (removed by a carboxypeptidase) is located at residue Arg65.

This sequence belongs to the long (4 C-C) scorpion toxin superfamily. Sodium channel inhibitor family. Alpha subfamily. In terms of tissue distribution, expressed by the venom gland.

The protein resides in the secreted. Functionally, alpha toxins bind voltage-independently at site-3 of sodium channels (Nav) and inhibit the inactivation of the activated channels, thereby blocking neuronal transmission. Electrophysiological studies of this were performed using sodium-channels expressed in F11 cell culture, by patch-clamp recordings. Affinity of this toxin toward sodium channels in F11 cell line is in the order of 1 uM concentration. This chain is Sodium channel alpha-toxin Acra4, found in Androctonus crassicauda (Arabian fat-tailed scorpion).